We begin with the raw amino-acid sequence, 506 residues long: Ribose import ATP-binding protein RbsA 1 (506 aa).

ABC transporter domains are found at residues 5–241 (LALT…VGRR) and 254–498 (RDAA…TSDA). Residue 37–44 (GENGAGKS) coordinates ATP.

It belongs to the ABC transporter superfamily. Ribose importer (TC 3.A.1.2.1) family. The complex is composed of an ATP-binding protein (RbsA), two transmembrane proteins (RbsC) and a solute-binding protein (RbsB).

The protein resides in the cell inner membrane. The enzyme catalyses D-ribose(out) + ATP + H2O = D-ribose(in) + ADP + phosphate + H(+). Its function is as follows. Part of the ABC transporter complex RbsABC involved in ribose import. Responsible for energy coupling to the transport system. This chain is Ribose import ATP-binding protein RbsA 1, found in Burkholderia thailandensis (strain ATCC 700388 / DSM 13276 / CCUG 48851 / CIP 106301 / E264).